We begin with the raw amino-acid sequence, 225 residues long: Enolase-phosphatase E1 (225 aa).

It belongs to the HAD-like hydrolase superfamily. MasA/MtnC family. As to quaternary structure, monomer. Mg(2+) is required as a cofactor.

It carries out the reaction 5-methylsulfanyl-2,3-dioxopentyl phosphate + H2O = 1,2-dihydroxy-5-(methylsulfanyl)pent-1-en-3-one + phosphate. The protein operates within amino-acid biosynthesis; L-methionine biosynthesis via salvage pathway; L-methionine from S-methyl-5-thio-alpha-D-ribose 1-phosphate: step 3/6. It participates in amino-acid biosynthesis; L-methionine biosynthesis via salvage pathway; L-methionine from S-methyl-5-thio-alpha-D-ribose 1-phosphate: step 4/6. Its function is as follows. Bifunctional enzyme that catalyzes the enolization of 2,3-diketo-5-methylthiopentyl-1-phosphate (DK-MTP-1-P) into the intermediate 2-hydroxy-3-keto-5-methylthiopentenyl-1-phosphate (HK-MTPenyl-1-P), which is then dephosphorylated to form the acireductone 1,2-dihydroxy-3-keto-5-methylthiopentene (DHK-MTPene). The protein is Enolase-phosphatase E1 of Pseudomonas aeruginosa (strain UCBPP-PA14).